Reading from the N-terminus, the 296-residue chain is 4-diphosphocytidyl-2-C-methyl-D-erythritol kinase (296 aa).

The active site involves K11. 95–105 (PVAAGMAGGSS) contributes to the ATP binding site. Residue D137 is part of the active site.

It belongs to the GHMP kinase family. IspE subfamily.

The catalysed reaction is 4-CDP-2-C-methyl-D-erythritol + ATP = 4-CDP-2-C-methyl-D-erythritol 2-phosphate + ADP + H(+). It functions in the pathway isoprenoid biosynthesis; isopentenyl diphosphate biosynthesis via DXP pathway; isopentenyl diphosphate from 1-deoxy-D-xylulose 5-phosphate: step 3/6. Functionally, catalyzes the phosphorylation of the position 2 hydroxy group of 4-diphosphocytidyl-2C-methyl-D-erythritol. The polypeptide is 4-diphosphocytidyl-2-C-methyl-D-erythritol kinase (Clostridioides difficile (strain 630) (Peptoclostridium difficile)).